Consider the following 395-residue polypeptide: Argininosuccinate synthase (395 aa).

Residues A9 to S17 and A37 contribute to the ATP site. Y87 and S92 together coordinate L-citrulline. G117 contacts ATP. L-aspartate contacts are provided by T119, N123, and D124. Residue N123 coordinates L-citrulline. L-citrulline-binding residues include R127, S173, S182, E258, and Y270.

The protein belongs to the argininosuccinate synthase family. Type 1 subfamily. Homotetramer.

The protein resides in the cytoplasm. It carries out the reaction L-citrulline + L-aspartate + ATP = 2-(N(omega)-L-arginino)succinate + AMP + diphosphate + H(+). It functions in the pathway amino-acid biosynthesis; L-arginine biosynthesis; L-arginine from L-ornithine and carbamoyl phosphate: step 2/3. The chain is Argininosuccinate synthase from Methanospirillum hungatei JF-1 (strain ATCC 27890 / DSM 864 / NBRC 100397 / JF-1).